The chain runs to 525 residues: Polyamine aminopropyltransferase 1 (525 aa).

The next 6 helical transmembrane spans lie at 21 to 41, 53 to 73, 89 to 109, 117 to 137, 155 to 175, and 180 to 200; these read ALLV…ELIA, ILQF…GSWV, LELL…LLFA, LVLY…IPLV, VLTF…LVLA, and LVRT…WTLW. Positions 220 to 464 constitute a PABS domain; the sequence is AGMVGAALLA…GEWGFILAAP (245 aa). A spermidine synthase region spans residues 222–471; it reads MVGAALLAGF…AAPGRADFRP (250 aa). Glutamine 259 provides a ligand contact to S-methyl-5'-thioadenosine. Residues histidine 289 and aspartate 313 each coordinate spermidine. S-methyl-5'-thioadenosine contacts are provided by residues aspartate 333 and 367-368; that span reads DA. The Proton acceptor role is filled by aspartate 385.

Belongs to the spermidine/spermine synthase family. In terms of assembly, homodimer or homotetramer.

It localises to the cell membrane. It catalyses the reaction S-adenosyl 3-(methylsulfanyl)propylamine + putrescine = S-methyl-5'-thioadenosine + spermidine + H(+). Its pathway is amine and polyamine biosynthesis; spermidine biosynthesis; spermidine from putrescine: step 1/1. In terms of biological role, catalyzes the irreversible transfer of a propylamine group from the amino donor S-adenosylmethioninamine (decarboxy-AdoMet) to putrescine (1,4-diaminobutane) to yield spermidine. The sequence is that of Polyamine aminopropyltransferase 1 from Ralstonia nicotianae (strain ATCC BAA-1114 / GMI1000) (Ralstonia solanacearum).